Here is a 146-residue protein sequence, read N- to C-terminus: Hemoglobin subunit beta (146 aa).

Val-1 carries the N-acetylvaline modification. In terms of domain architecture, Globin spans 2–146; it reads HLSGEEKAAV…VANALAHKYH (145 aa). A Phosphothreonine modification is found at Thr-12. At Ser-44 the chain carries Phosphoserine. Lys-59 carries the N6-acetyllysine modification. Residue His-63 coordinates heme b. At Lys-82 the chain carries N6-acetyllysine. A heme b-binding site is contributed by His-92. Cys-93 is modified (S-nitrosocysteine). N6-acetyllysine is present on Lys-144.

Belongs to the globin family. As to quaternary structure, heterotetramer of two alpha chains and two beta chains. Red blood cells.

Its function is as follows. Involved in oxygen transport from the lung to the various peripheral tissues. The sequence is that of Hemoglobin subunit beta (HBB) from Pteropus alecto (Black flying fox).